Consider the following 235-residue polypeptide: Isoprenyl transferase (235 aa).

The active site involves aspartate 21. Aspartate 21 lines the Mg(2+) pocket. Residues glycine 22–arginine 25, tryptophan 26, lysine 34, histidine 38, and serine 66–glutamate 68 contribute to the substrate site. The active-site Proton acceptor is asparagine 69. Substrate is bound by residues tryptophan 70, arginine 72, arginine 183, and arginine 189 to serine 191. Glutamate 202 serves as a coordination point for Mg(2+).

This sequence belongs to the UPP synthase family. In terms of assembly, homodimer. Requires Mg(2+) as cofactor.

Its function is as follows. Catalyzes the condensation of isopentenyl diphosphate (IPP) with allylic pyrophosphates generating different type of terpenoids. In Rickettsia conorii (strain ATCC VR-613 / Malish 7), this protein is Isoprenyl transferase.